Consider the following 359-residue polypeptide: 4-hydroxy-3-methylbut-2-en-1-yl diphosphate synthase (flavodoxin) (359 aa).

[4Fe-4S] cluster is bound by residues C264, C267, C299, and E306.

The protein belongs to the IspG family. [4Fe-4S] cluster is required as a cofactor.

It catalyses the reaction (2E)-4-hydroxy-3-methylbut-2-enyl diphosphate + oxidized [flavodoxin] + H2O + 2 H(+) = 2-C-methyl-D-erythritol 2,4-cyclic diphosphate + reduced [flavodoxin]. It participates in isoprenoid biosynthesis; isopentenyl diphosphate biosynthesis via DXP pathway; isopentenyl diphosphate from 1-deoxy-D-xylulose 5-phosphate: step 5/6. In terms of biological role, converts 2C-methyl-D-erythritol 2,4-cyclodiphosphate (ME-2,4cPP) into 1-hydroxy-2-methyl-2-(E)-butenyl 4-diphosphate. This chain is 4-hydroxy-3-methylbut-2-en-1-yl diphosphate synthase (flavodoxin), found in Helicobacter pylori (strain P12).